Consider the following 261-residue polypeptide: Short-chain dehydrogenase/reductase ARMGADRAFT_1018421 (261 aa).

8 residues coordinate NADP(+): Ile21, Asp68, Asn95, Lys128, Tyr161, Lys165, Val194, and Thr196. The Proton acceptor role is filled by Tyr161. The active-site Lowers pKa of active site Tyr is Lys165.

This sequence belongs to the short-chain dehydrogenases/reductases (SDR) family.

The protein operates within secondary metabolite biosynthesis. Its function is as follows. Short-chain dehydrogenase/reductase, part of the gene cluster that mediates the biosynthesis of melleolides, a range of antifungal and phytotoxic polyketide derivatives composed of an orsellinic acid (OA) moiety esterified to various sesquiterpene alcohols. The first step in melleolides biosynthesis is performed by the delta(6)-protoilludene synthase PRO1 which catalyzes the cyclization of farnesyl diphosphate to protoilludene. The orsellinic acid synthase armB produces OA by condensing acetyl-CoA with 3 malonyl-CoA units in a three-round chain elongation reaction folowed by a C2-C7 ring closure. ArmB further catalyzes the trans-esterification of OA to the various sesquiterpene alcohols resulting from the hydroxylation of protoilludene. The melleolides cluster also includes 5 cytochrome P450 monooxygenases, 4 NAD(+)-dependent oxidoreductases, one flavin-dependent oxidoreductase, and one O-methyltransferase. The cytochrome P450 monooxygenases may be involved in protoilludene hydroxylation to elaborate melleolides with multiple alcohol groups, such as melleolide D, which carries alcohol functionalities at C-4, C-5, C-10, and C-13. The role of the NAD(+)-dependent enzymes remains unknown. Numerous melleolides, including arnamial, show 5'-O-methylation of the aromatic moiety which may be catalyzed by the methyltransferase encoded in the cluster. The flavin-dependent oxidoreductase might represent the dehydrogenase yielding the aldehyde in position 1 of arnamial and other melleolides. Finally, several halogenase localized outside of the cluster, are able to catalyze the transfer of a single chlorine atom to the melleolide backbone, resulting in a 6'-chloromelleolide product. The chain is Short-chain dehydrogenase/reductase ARMGADRAFT_1018421 from Armillaria gallica (Bulbous honey fungus).